The following is a 316-amino-acid chain: 4-hydroxy-3-methylbut-2-enyl diphosphate reductase (316 aa).

Cysteine 12 contributes to the [4Fe-4S] cluster binding site. (2E)-4-hydroxy-3-methylbut-2-enyl diphosphate-binding residues include histidine 43 and histidine 81. Histidine 43 and histidine 81 together coordinate dimethylallyl diphosphate. Positions 43 and 81 each coordinate isopentenyl diphosphate. Residue cysteine 103 participates in [4Fe-4S] cluster binding. (2E)-4-hydroxy-3-methylbut-2-enyl diphosphate is bound at residue histidine 131. Dimethylallyl diphosphate is bound at residue histidine 131. Position 131 (histidine 131) interacts with isopentenyl diphosphate. The Proton donor role is filled by glutamate 133. Threonine 170 is a binding site for (2E)-4-hydroxy-3-methylbut-2-enyl diphosphate. Cysteine 198 is a binding site for [4Fe-4S] cluster. Residues serine 226, asparagine 228, and serine 271 each coordinate (2E)-4-hydroxy-3-methylbut-2-enyl diphosphate. Residues serine 226, asparagine 228, and serine 271 each coordinate dimethylallyl diphosphate. 3 residues coordinate isopentenyl diphosphate: serine 226, asparagine 228, and serine 271.

Belongs to the IspH family. [4Fe-4S] cluster serves as cofactor.

It carries out the reaction isopentenyl diphosphate + 2 oxidized [2Fe-2S]-[ferredoxin] + H2O = (2E)-4-hydroxy-3-methylbut-2-enyl diphosphate + 2 reduced [2Fe-2S]-[ferredoxin] + 2 H(+). It catalyses the reaction dimethylallyl diphosphate + 2 oxidized [2Fe-2S]-[ferredoxin] + H2O = (2E)-4-hydroxy-3-methylbut-2-enyl diphosphate + 2 reduced [2Fe-2S]-[ferredoxin] + 2 H(+). It participates in isoprenoid biosynthesis; dimethylallyl diphosphate biosynthesis; dimethylallyl diphosphate from (2E)-4-hydroxy-3-methylbutenyl diphosphate: step 1/1. Its pathway is isoprenoid biosynthesis; isopentenyl diphosphate biosynthesis via DXP pathway; isopentenyl diphosphate from 1-deoxy-D-xylulose 5-phosphate: step 6/6. Functionally, catalyzes the conversion of 1-hydroxy-2-methyl-2-(E)-butenyl 4-diphosphate (HMBPP) into a mixture of isopentenyl diphosphate (IPP) and dimethylallyl diphosphate (DMAPP). Acts in the terminal step of the DOXP/MEP pathway for isoprenoid precursor biosynthesis. This chain is 4-hydroxy-3-methylbut-2-enyl diphosphate reductase, found in Bacillus mycoides (strain KBAB4) (Bacillus weihenstephanensis).